The primary structure comprises 543 residues: Hydroxylamine reductase (543 aa).

Residues Cys-3, Cys-6, Cys-15, and Cys-21 each contribute to the [4Fe-4S] cluster site. Positions 244, 268, 312, 399, 427, 452, 486, and 488 each coordinate hybrid [4Fe-2O-2S] cluster. Cys-399 carries the cysteine persulfide modification.

Belongs to the HCP family. The cofactor is [4Fe-4S] cluster. It depends on hybrid [4Fe-2O-2S] cluster as a cofactor.

It localises to the cytoplasm. It catalyses the reaction A + NH4(+) + H2O = hydroxylamine + AH2 + H(+). Catalyzes the reduction of hydroxylamine to form NH(3) and H(2)O. This Methanocella arvoryzae (strain DSM 22066 / NBRC 105507 / MRE50) protein is Hydroxylamine reductase.